The sequence spans 521 residues: Protein nucleotidyltransferase YdiU (521 aa).

ATP contacts are provided by Gly109, Gly111, Arg112, Lys131, Asp143, Gly144, Arg194, and Arg201. Residue Asp270 is the Proton acceptor of the active site. Mg(2+) contacts are provided by Asn271 and Asp280. Asp280 contacts ATP.

It belongs to the SELO family. The cofactor is Mg(2+). It depends on Mn(2+) as a cofactor.

The catalysed reaction is L-seryl-[protein] + ATP = 3-O-(5'-adenylyl)-L-seryl-[protein] + diphosphate. It catalyses the reaction L-threonyl-[protein] + ATP = 3-O-(5'-adenylyl)-L-threonyl-[protein] + diphosphate. It carries out the reaction L-tyrosyl-[protein] + ATP = O-(5'-adenylyl)-L-tyrosyl-[protein] + diphosphate. The enzyme catalyses L-histidyl-[protein] + UTP = N(tele)-(5'-uridylyl)-L-histidyl-[protein] + diphosphate. The catalysed reaction is L-seryl-[protein] + UTP = O-(5'-uridylyl)-L-seryl-[protein] + diphosphate. It catalyses the reaction L-tyrosyl-[protein] + UTP = O-(5'-uridylyl)-L-tyrosyl-[protein] + diphosphate. Its function is as follows. Nucleotidyltransferase involved in the post-translational modification of proteins. It can catalyze the addition of adenosine monophosphate (AMP) or uridine monophosphate (UMP) to a protein, resulting in modifications known as AMPylation and UMPylation. This chain is Protein nucleotidyltransferase YdiU, found in Burkholderia thailandensis (strain ATCC 700388 / DSM 13276 / CCUG 48851 / CIP 106301 / E264).